We begin with the raw amino-acid sequence, 680 residues long: Cytosolic endo-beta-N-acetylglucosaminidase 1 (680 aa).

The segment covering 1–15 has biased composition (pro residues); it reads MSVAPPAPSPPPFDP. The segment at 1–21 is disordered; the sequence is MSVAPPAPSPPPFDPTKPSTP.

The protein belongs to the glycosyl hydrolase 85 family.

It localises to the cytoplasm. Its subcellular location is the cytosol. It carries out the reaction an N(4)-(oligosaccharide-(1-&gt;3)-[oligosaccharide-(1-&gt;6)]-beta-D-Man-(1-&gt;4)-beta-D-GlcNAc-(1-&gt;4)-alpha-D-GlcNAc)-L-asparaginyl-[protein] + H2O = an oligosaccharide-(1-&gt;3)-[oligosaccharide-(1-&gt;6)]-beta-D-Man-(1-&gt;4)-D-GlcNAc + N(4)-(N-acetyl-beta-D-glucosaminyl)-L-asparaginyl-[protein]. Endoglycosidase that releases N-glycans from glycoproteins by cleaving the beta-1,4-glycosidic bond in the N,N'-diacetylchitobiose core. Involved in the production of high-mannose type N-glycans during plant development and fruit maturation. The chain is Cytosolic endo-beta-N-acetylglucosaminidase 1 from Arabidopsis thaliana (Mouse-ear cress).